A 77-amino-acid chain; its full sequence is Acyl carrier protein (77 aa).

In terms of domain architecture, Carrier spans 2 to 77; that stretch reads SDVAERVKKI…DAIDFITANS (76 aa). S37 is modified (O-(pantetheine 4'-phosphoryl)serine).

The protein belongs to the acyl carrier protein (ACP) family. In terms of processing, 4'-phosphopantetheine is transferred from CoA to a specific serine of apo-ACP by AcpS. This modification is essential for activity because fatty acids are bound in thioester linkage to the sulfhydryl of the prosthetic group.

It is found in the cytoplasm. The protein operates within lipid metabolism; fatty acid biosynthesis. Its function is as follows. Carrier of the growing fatty acid chain in fatty acid biosynthesis. This is Acyl carrier protein from Paramagnetospirillum magneticum (strain ATCC 700264 / AMB-1) (Magnetospirillum magneticum).